The chain runs to 205 residues: Cryptic plasmid protein C (205 aa).

The disordered stretch occupies residues 142-205 (THGYSDPDDP…RAGNAGKGRF (64 aa)). Residues 155–174 (QSMTQAKDLPRNTQEAAQSI) show a composition bias toward polar residues. The span at 189–205 (QAKKPRRRAGNAGKGRF) shows a compositional bias: basic residues.

The polypeptide is Cryptic plasmid protein C (cppC) (Neisseria gonorrhoeae).